The primary structure comprises 375 residues: Period circadian protein (375 aa).

3 disordered regions span residues 27-119, 140-189, and 219-255; these read VTAP…VPPV, KHRE…WEGE, and KCQA…QYTQ. Residues 69–91 are compositionally biased toward low complexity; sequence SGNFTTGSNLHMSSVTNTSNAGT. The segment covering 92–113 has biased composition (gly residues); that stretch reads GTSGTGNSGGGGGGGGGAGPGN. Residues 145–156 are compositionally biased toward basic and acidic residues; it reads RGRSGEKNKKSA. The span at 224–243 shows a compositional bias: gly residues; that stretch reads GAGGGGSGSVGGTGNIGSGG. Residues 245-255 are compositionally biased toward polar residues; sequence NAQPSTNQYTQ.

In terms of assembly, forms a heterodimer with timeless (TIM); the complex then translocates into the nucleus. In terms of processing, phosphorylated with a circadian rhythmicity, probably by the double-time protein (dbt). Phosphorylation could be implicated in the stability of per monomer and in the formation of heterodimer per-tim.

Its subcellular location is the nucleus. It localises to the cytoplasm. The protein resides in the perinuclear region. Functionally, essential for biological clock functions. Determines the period length of circadian and ultradian rhythms; an increase in PER dosage leads to shortened circadian rhythms and a decrease leads to lengthened circadian rhythms. Essential for the circadian rhythmicity of locomotor activity, eclosion behavior, and for the rhythmic component of the male courtship song that originates in the thoracic nervous system. The biological cycle depends on the rhythmic formation and nuclear localization of the TIM-PER complex. Light induces the degradation of TIM, which promotes elimination of PER. Nuclear activity of the heterodimer coordinatively regulates PER and TIM transcription through a negative feedback loop. Behaves as a negative element in circadian transcriptional loop. Does not appear to bind DNA, suggesting indirect transcriptional inhibition. The protein is Period circadian protein (per) of Drosophila sucinea (Fruit fly).